The primary structure comprises 432 residues: Enolase (432 aa).

Gln-166 provides a ligand contact to (2R)-2-phosphoglycerate. The active-site Proton donor is the Glu-210. Asp-247, Glu-288, and Asp-315 together coordinate Mg(2+). (2R)-2-phosphoglycerate is bound by residues Lys-340, Arg-369, Ser-370, and Lys-391. Lys-340 functions as the Proton acceptor in the catalytic mechanism.

Belongs to the enolase family. Requires Mg(2+) as cofactor.

The protein localises to the cytoplasm. Its subcellular location is the secreted. It localises to the cell surface. The enzyme catalyses (2R)-2-phosphoglycerate = phosphoenolpyruvate + H2O. It functions in the pathway carbohydrate degradation; glycolysis; pyruvate from D-glyceraldehyde 3-phosphate: step 4/5. Its function is as follows. Catalyzes the reversible conversion of 2-phosphoglycerate (2-PG) into phosphoenolpyruvate (PEP). It is essential for the degradation of carbohydrates via glycolysis. This chain is Enolase, found in Aeropyrum pernix (strain ATCC 700893 / DSM 11879 / JCM 9820 / NBRC 100138 / K1).